Consider the following 747-residue polypeptide: DNA ligase (747 aa).

Residues 113–117, 161–162, and Glu190 each bind NAD(+); these read DRAYD and SI. Catalysis depends on Lys192, which acts as the N6-AMP-lysine intermediate. NAD(+)-binding residues include Arg213, Glu249, Lys364, and Lys388. Zn(2+) contacts are provided by Cys479, Cys482, Cys495, and Cys501. Residues 660–747 form the BRCT domain; sequence TTNAPLSDLT…EHDDTLTWPP (88 aa).

It belongs to the NAD-dependent DNA ligase family. LigA subfamily. Requires Mg(2+) as cofactor. It depends on Mn(2+) as a cofactor.

The catalysed reaction is NAD(+) + (deoxyribonucleotide)n-3'-hydroxyl + 5'-phospho-(deoxyribonucleotide)m = (deoxyribonucleotide)n+m + AMP + beta-nicotinamide D-nucleotide.. Functionally, DNA ligase that catalyzes the formation of phosphodiester linkages between 5'-phosphoryl and 3'-hydroxyl groups in double-stranded DNA using NAD as a coenzyme and as the energy source for the reaction. It is essential for DNA replication and repair of damaged DNA. The polypeptide is DNA ligase (Haloquadratum walsbyi (strain DSM 16790 / HBSQ001)).